Reading from the N-terminus, the 314-residue chain is Ribose-phosphate pyrophosphokinase (314 aa).

Residues 37–39 (DGE) and 96–97 (RQ) each bind ATP. Mg(2+) contacts are provided by His-131 and Asp-170. The active site involves Lys-194. D-ribose 5-phosphate is bound by residues Arg-196, Asp-220, and 224 to 228 (DTGGT).

Belongs to the ribose-phosphate pyrophosphokinase family. Class I subfamily. In terms of assembly, homohexamer. Mg(2+) serves as cofactor.

Its subcellular location is the cytoplasm. It catalyses the reaction D-ribose 5-phosphate + ATP = 5-phospho-alpha-D-ribose 1-diphosphate + AMP + H(+). It participates in metabolic intermediate biosynthesis; 5-phospho-alpha-D-ribose 1-diphosphate biosynthesis; 5-phospho-alpha-D-ribose 1-diphosphate from D-ribose 5-phosphate (route I): step 1/1. Involved in the biosynthesis of the central metabolite phospho-alpha-D-ribosyl-1-pyrophosphate (PRPP) via the transfer of pyrophosphoryl group from ATP to 1-hydroxyl of ribose-5-phosphate (Rib-5-P). This Vibrio vulnificus (strain CMCP6) protein is Ribose-phosphate pyrophosphokinase.